Reading from the N-terminus, the 93-residue chain is Alpha-defensin 1 (93 aa).

Residues 1-19 (MKKLVLLFALVLLGFQVQA) form the signal peptide. The propeptide occupies 20–58 (DSIQNTDEETKTEEQPGEEDQAVSVSFGDPEGTSLQEES). The segment at 24–54 (NTDEETKTEEQPGEEDQAVSVSFGDPEGTSL) is disordered. 3 disulfide bridges follow: Cys64–Cys92, Cys66–Cys81, and Cys71–Cys91.

Belongs to the alpha-defensin family. As to expression, paneth cells of the small bowel.

It localises to the secreted. Probably contributes to the antimicrobial barrier function of the small bowel mucosa. Has antibacterial activity against attenuated mutants of S.typhimurium. The sequence is that of Alpha-defensin 1 (Defa1) from Mus musculus (Mouse).